The following is a 651-amino-acid chain: Acetyl-coenzyme A synthetase (651 aa).

Residues 189–192, T311, and N335 contribute to the CoA site; that span reads RGGK. ATP contacts are provided by residues 387–389, 411–416, D500, and R515; these read GEP and DTWWQT. Position 523 (S523) interacts with CoA. R526 contacts ATP. The Mg(2+) site is built by V537, H539, and V542. CoA is bound at residue R584. Position 609 is an N6-acetyllysine (K609).

This sequence belongs to the ATP-dependent AMP-binding enzyme family. Mg(2+) is required as a cofactor. Acetylated. Deacetylation by the SIR2-homolog deacetylase activates the enzyme.

It catalyses the reaction acetate + ATP + CoA = acetyl-CoA + AMP + diphosphate. In terms of biological role, catalyzes the conversion of acetate into acetyl-CoA (AcCoA), an essential intermediate at the junction of anabolic and catabolic pathways. AcsA undergoes a two-step reaction. In the first half reaction, AcsA combines acetate with ATP to form acetyl-adenylate (AcAMP) intermediate. In the second half reaction, it can then transfer the acetyl group from AcAMP to the sulfhydryl group of CoA, forming the product AcCoA. The protein is Acetyl-coenzyme A synthetase of Agrobacterium fabrum (strain C58 / ATCC 33970) (Agrobacterium tumefaciens (strain C58)).